Reading from the N-terminus, the 103-residue chain is NADH-quinone oxidoreductase subunit K 1 (103 aa).

A run of 3 helical transmembrane segments spans residues 6–26 (LGHF…GIFL), 32–52 (IIIL…LVAF), and 67–87 (LVLT…VVFF).

The protein belongs to the complex I subunit 4L family. As to quaternary structure, NDH-1 is composed of 14 different subunits. Subunits NuoA, H, J, K, L, M, N constitute the membrane sector of the complex.

Its subcellular location is the cell inner membrane. It carries out the reaction a quinone + NADH + 5 H(+)(in) = a quinol + NAD(+) + 4 H(+)(out). Functionally, NDH-1 shuttles electrons from NADH, via FMN and iron-sulfur (Fe-S) centers, to quinones in the respiratory chain. The immediate electron acceptor for the enzyme in this species is believed to be ubiquinone. Couples the redox reaction to proton translocation (for every two electrons transferred, four hydrogen ions are translocated across the cytoplasmic membrane), and thus conserves the redox energy in a proton gradient. The sequence is that of NADH-quinone oxidoreductase subunit K 1 from Rhodopseudomonas palustris (strain ATCC BAA-98 / CGA009).